The sequence spans 305 residues: GMP synthase [glutamine-hydrolyzing] subunit B (305 aa).

Residues 2-185 (VETEEFIAEA…LGLEEVISER (184 aa)) form the GMPS ATP-PPase domain. Position 29–35 (29–35 (SGGVDSS)) interacts with ATP.

As to quaternary structure, heterodimer composed of a glutamine amidotransferase subunit (A) and a GMP-binding subunit (B).

It carries out the reaction XMP + L-glutamine + ATP + H2O = GMP + L-glutamate + AMP + diphosphate + 2 H(+). Its pathway is purine metabolism; GMP biosynthesis; GMP from XMP (L-Gln route): step 1/1. Functionally, catalyzes the synthesis of GMP from XMP. The chain is GMP synthase [glutamine-hydrolyzing] subunit B from Halorubrum lacusprofundi (strain ATCC 49239 / DSM 5036 / JCM 8891 / ACAM 34).